A 478-amino-acid chain; its full sequence is H(+)/Cl(-) exchange transporter ClcA (478 aa).

Residues 1 to 32 (MTHSTQQLSPEGVAEGKRGRLIRELVNRDKTP) lie on the Cytoplasmic side of the membrane. Residues 33 to 69 (LIILIMAAVVGVVTGLLGVAFDRGVDWVQQQRLLALA) form a helical membrane-spanning segment. Residues 70–76 (NVADSAL) lie on the Periplasmic side of the membrane. A helical membrane pass occupies residues 77–100 (LVWPLAFIMSALLAMMGYFLVSRF). The short motif at 106–110 (GSGIP) is the Selectivity filter part_1 element. Chloride is bound at residue S107. Residues 109-116 (IPEIEGAM) constitute an intramembrane region (helical). Residues 117–123 (EEMRPVR) are Cytoplasmic-facing. The next 2 membrane-spanning stretches (helical) occupy residues 124–141 (WWRV…TLGA) and 148–166 (EGPM…VDIF). Positions 146 to 150 (GREGP) match the Selectivity filter part_2 motif. At 167 to 176 (RLRSPEARHS) the chain is on the cytoplasmic side. Intramembrane regions (helical) lie at residues 177-189 (LLAT…LSAA) and 193-201 (PLAGILFVI). Topologically, residues 202-214 (EEMRSQFRYSLVS) are cytoplasmic. The helical transmembrane segment at 215-232 (IKAVFIGVITSTIVYRYF) threads the bilayer. Over 233 to 252 (NGERAIIEVGKLSDAPLNTL) the chain is Periplasmic. A helical membrane pass occupies residues 253-281 (WLYLLLGIIFGAVGVIFNALIFRTQDMFV). Over 282–287 (RFHGGD) the chain is Cytoplasmic. The chain crosses the membrane as a helical span at residues 288 to 309 (WRKLVLIGGLLGGMCGLLALLH). Residues 310 to 329 (GNAVGGGFALIPIAAAGNFS) lie on the Periplasmic side of the membrane. 2 consecutive transmembrane segments (helical) span residues 330–349 (IGML…LCFG) and 355–376 (GIFA…LSCA). Residues 355–359 (GIFAP) carry the Selectivity filter part_3 motif. Chloride-binding residues include I356 and F357. Over 377–386 (HFFPQYGIEA) the chain is Periplasmic. Positions 387-401 (GTFAIAGMGALFAAS) form an intramembrane region, helical. The segment at residues 402–404 (VRA) is an intramembrane region (note=Loop between two helices). Positions 405–416 (PLTGIVLVLEMT) form an intramembrane region, helical. The note=Loop between two helices intramembrane region spans 417–421 (DNYQL). A helical membrane pass occupies residues 422–438 (ILPMIVTCLGATLIAQF). Residues 439-478 (MGGKPLYSAILARTLAKQEQARATVIAQEPAVENTPQTGR) are Cytoplasmic-facing. Y445 contributes to the chloride binding site.

Belongs to the chloride channel (TC 2.A.49) family. ClcA subfamily. As to quaternary structure, homodimer.

Its subcellular location is the cell inner membrane. It carries out the reaction 2 chloride(in) + H(+)(out) = 2 chloride(out) + H(+)(in). Functionally, proton-coupled chloride transporter. Functions as antiport system and exchanges two chloride ions for 1 proton. Probably acts as an electrical shunt for an outwardly-directed proton pump that is linked to amino acid decarboxylation, as part of the extreme acid resistance (XAR) response. The protein is H(+)/Cl(-) exchange transporter ClcA of Yersinia pseudotuberculosis serotype IB (strain PB1/+).